Consider the following 968-residue polypeptide: uncharacterized protein (968 aa).

A helical membrane pass occupies residues 12 to 32; it reads LIFIFSLFFLILFFLESSIGF.

It to E.coli YtfN.

The protein resides in the membrane. This is an uncharacterized protein from Buchnera aphidicola subsp. Schizaphis graminum (strain Sg).